A 303-amino-acid chain; its full sequence is Fe-S cluster assembly protein DRE2 (303 aa).

Residues 1–125 (MTHSRTALVL…WQKRAVTASA (125 aa)) form an N-terminal SAM-like domain region. Residues 126–188 (PVKLAPRQPV…GDAPIAENDL (63 aa)) form a linker region. Cysteine 202, cysteine 213, cysteine 216, and cysteine 218 together coordinate [2Fe-2S] cluster. Residues 202 to 218 (CGRTQTRRRKACKDCTC) are fe-S binding site A. Residues cysteine 266, cysteine 269, cysteine 277, and cysteine 280 each contribute to the [4Fe-4S] cluster site. Short sequence motifs (cx2C motif) lie at residues 266-269 (CGSC) and 277-280 (CSGC). The tract at residues 266–280 (CGSCSLGDAFRCSGC) is fe-S binding site B.

The protein belongs to the anamorsin family. As to quaternary structure, monomer. Interacts with TAH18. Interacts with MIA40. It depends on [2Fe-2S] cluster as a cofactor. The cofactor is [4Fe-4S] cluster.

The protein resides in the cytoplasm. It localises to the mitochondrion intermembrane space. Functionally, component of the cytosolic iron-sulfur (Fe-S) protein assembly (CIA) machinery required for the maturation of extramitochondrial Fe-S proteins. Part of an electron transfer chain functioning in an early step of cytosolic Fe-S biogenesis, facilitating the de novo assembly of a [4Fe-4S] cluster on the scaffold complex CFD1-NBP35. Electrons are transferred to DRE2 from NADPH via the FAD- and FMN-containing protein TAH18. TAH18-DRE2 are also required for the assembly of the diferric tyrosyl radical cofactor of ribonucleotide reductase (RNR), probably by providing electrons for reduction during radical cofactor maturation in the catalytic small subunit RNR2. This is Fe-S cluster assembly protein DRE2 from Eremothecium gossypii (strain ATCC 10895 / CBS 109.51 / FGSC 9923 / NRRL Y-1056) (Yeast).